Reading from the N-terminus, the 863-residue chain is Glycerol-3-phosphate acyltransferase (863 aa).

Residues 1–29 are disordered; that stretch reads MPKKNSPLLPKETTTTQSSVDTSGSSNLT. Residues 12-29 show a composition bias toward polar residues; that stretch reads ETTTTQSSVDTSGSSNLT. Residues 343-348 carry the HXXXXD motif motif; that stretch reads SHRSHI.

The protein belongs to the GPAT/DAPAT family.

The protein localises to the cell inner membrane. The enzyme catalyses sn-glycerol 3-phosphate + an acyl-CoA = a 1-acyl-sn-glycero-3-phosphate + CoA. It participates in phospholipid metabolism; CDP-diacylglycerol biosynthesis; CDP-diacylglycerol from sn-glycerol 3-phosphate: step 1/3. The sequence is that of Glycerol-3-phosphate acyltransferase from Xylella fastidiosa (strain M12).